The chain runs to 195 residues: Auxin-responsive protein IAA14 (195 aa).

Disordered regions lie at residues M1–S61 and S85–G107. An EAR-like (transcriptional repression) motif is present at residues L10–L14. A PB1 domain is found at G108–G191.

Belongs to the Aux/IAA family. As to quaternary structure, homodimers and heterodimers. In terms of tissue distribution, highly expressed in flowers. Expressed in etiolated seedlings.

It localises to the nucleus. Its function is as follows. Aux/IAA proteins are short-lived transcriptional factors that function as repressors of early auxin response genes at low auxin concentrations. The sequence is that of Auxin-responsive protein IAA14 (IAA14) from Oryza sativa subsp. japonica (Rice).